Consider the following 327-residue polypeptide: MDTGTHVVMGIALGGIATLDPVVGSDPAMAHAVMIATLAGSQAPDIDTVLKLKNNAVYIRNHRGFTHSIPAVLFWSVIIPAILYLFYPQADFLHLWLWTLLAVVLHVFVDIFNAYGTQAIRPFSKKWVALGLINTFDPFIFISHLAAIAIWYAGGSPGITFLSLYIILVGYYLVRLIMQLRIKRKLHEMIHDEIESIIISPTMKFRQWRIAVTTAHAFYVGRSMEGHVVILDTFNRVPVPETDVMHAAKQDDNIAAFLSFSPVYRWEVDTFKDHYEVRFIDLRYRSKGHYPFVAIVHIGHDLTIRSSYTGWIFSEEKLQKKLKLGSI.

Transmembrane regions (helical) follow at residues Ser-68–Pro-88, Phe-92–Phe-112, Trp-127–Ala-147, and Ile-148–Leu-168.

The protein resides in the cell membrane. May act as a negative regulator for the transcription of mutY, fabL, sspE and yfhP. This is an uncharacterized protein from Bacillus subtilis (strain 168).